Consider the following 583-residue polypeptide: Complement factor I (583 aa).

Positions 1-18 (MKLLHVFLLFLCFHLRFC) are cleaved as a signal peptide. Disulfide bonds link Cys33-Cys255, Cys43-Cys54, Cys48-Cys59, Cys61-Cys93, Cys67-Cys86, Cys75-Cys106, Cys141-Cys181, Cys154-Cys214, Cys186-Cys196, Cys229-Cys247, Cys241-Cys256, Cys259-Cys271, Cys266-Cys284, Cys278-Cys293, Cys327-Cys453, Cys365-Cys381, and Cys373-Cys444. In terms of domain architecture, Kazal-like spans 55 to 108 (IEGTCVCKLPYQCPKNGTAVCATNRRSFPTYCQQKSLECLHPGTKFLNNGTCTA). A glycan (N-linked (GlcNAc...) asparagine) is linked at Asn70. An N-linked (GlcNAc...) (complex) asparagine glycan is attached at Asn103. The SRCR domain occupies 114 to 212 (VSLKHGNTDS…TMGYQDFADV (99 aa)). Asn177 is a glycosylation site (N-linked (GlcNAc...) asparagine). LDL-receptor class A domains lie at 213-257 (VCYT…LCCK) and 258-294 (ACQG…VGCA). The Ca(2+) site is built by Lys239, Asp242, Ile244, Asp246, Asp252, and Glu253. 6 residues coordinate Ca(2+): Tyr276, Asn279, Glu281, Asp283, Asp289, and Glu290. The 235-residue stretch at 340 to 574 (IVGGKRAQLG…YFDWISYHVG (235 aa)) folds into the Peptidase S1 domain. Catalysis depends on charge relay system residues His380 and Asp429. Residues Asn464 and Asn494 are each glycosylated (N-linked (GlcNAc...) asparagine). 3 cysteine pairs are disulfide-bonded: Cys467/Cys531, Cys495/Cys510, and Cys521/Cys550. Residue Ser525 is the Charge relay system of the active site. Asn536 carries N-linked (GlcNAc...) asparagine glycosylation.

Belongs to the peptidase S1 family. As to quaternary structure, heterodimer of a light and heavy chains; disulfide-linked. The fully processed and mature protein circulates as a zymogen, and is allosterically activated by substrate-induced remodeling of the active site. Interacts with C3b. Interacts with complement factor H. (Microbial infection) Interacts with Staphylococcus aureus clumping factor A/ClfA; this interaction enhances cleavage of C3b into iC3b by CFI. As to expression, expressed in the liver by hepatocytes. Also present in other cells such as monocytes, fibroblasts or keratinocytes.

It localises to the secreted. Its subcellular location is the extracellular space. The enzyme catalyses Inactivates complement subcomponents C3b, iC3b and C4b by proteolytic cleavage.. Trypsin-like serine protease that plays an essential role in regulating the immune response by controlling all complement pathways. Inhibits these pathways by cleaving three peptide bonds in the alpha-chain of C3b and two bonds in the alpha-chain of C4b thereby inactivating these proteins. Essential cofactors for these reactions include factor H and C4BP in the fluid phase and membrane cofactor protein/CD46 and CR1 on cell surfaces. The presence of these cofactors on healthy cells allows degradation of deposited C3b by CFI in order to prevent undesired complement activation, while in apoptotic cells or microbes, the absence of such cofactors leads to C3b-mediated complement activation and subsequent opsonization. The chain is Complement factor I (CFI) from Homo sapiens (Human).